A 421-amino-acid polypeptide reads, in one-letter code: AA11 family lytic polysaccharide monooxygenase (421 aa).

The first 19 residues, methionine 1–glycine 19, serve as a signal peptide directing secretion. 3 residues coordinate Cu(+): histidine 20, histidine 79, and glutamate 93. 3 cysteine pairs are disulfide-bonded: cysteine 48–cysteine 162, cysteine 84–cysteine 110, and cysteine 201–cysteine 235. A glycan (N-linked (GlcNAc...) asparagine) is linked at asparagine 117. The tract at residues glycine 231 to leucine 349 is disordered. Residues threonine 247–threonine 285 are compositionally biased toward low complexity. A compositionally biased stretch (polar residues) spans serine 304 to proline 314. The span at serine 315–leucine 349 shows a compositional bias: low complexity.

The protein belongs to the polysaccharide monooxygenase AA11 family. Cu(2+) is required as a cofactor.

Its function is as follows. Lytic polysaccharide monooxygenase (LPMO) that depolymerizes chitin via the oxidation of scissile beta-(1-4)-glycosidic bonds, yielding C1 or C4 oxidation products. Catalysis by LPMOs requires the reduction of the active-site copper from Cu(II) to Cu(I) by a reducing agent and H(2)O(2) or O(2) as a cosubstrate. Active on chitin but has no activity on other substrates, including diverse mannans, cellulose and starch (data not shown). Primary chain cleavage yields predominantly aldonic acid oligosaccharides with even-numbered degrees of polymerization. The chain is AA11 family lytic polysaccharide monooxygenase from Aspergillus oryzae (strain ATCC 42149 / RIB 40) (Yellow koji mold).